Reading from the N-terminus, the 519-residue chain is Halolysin (519 aa).

Residues 1 to 27 constitute a signal peptide (tat-type signal); it reads MAGTPNFDRRSFLRLAAAAGLTGMAGV. A propeptide spanning residues 28 to 116 is cleaved from the precursor; the sequence is TSATPGRSPG…AEKNATHEAL (89 aa). In terms of domain architecture, Peptidase S8 spans 127–400; it reads QYAPQQVNAD…SGRVDAANAV (274 aa). Active-site charge relay system residues include D154, H193, and S347. Positions 386–425 are disordered; it reads STKQGSGRVDAANAVTTDPGDGGGGGGGGSKETTYDGTLS. Gly residues predominate over residues 405-415; the sequence is GDGGGGGGGGS.

The protein belongs to the peptidase S8 family. Post-translationally, predicted to be exported by the Tat system. The position of the signal peptide cleavage has not been experimentally proven.

It localises to the secreted. Functionally, probable secreted halophilic serine protease showing proteolytic activity toward the protease general substrate azocasein. This Haloferax mediterranei (strain ATCC 33500 / DSM 1411 / JCM 8866 / NBRC 14739 / NCIMB 2177 / R-4) (Halobacterium mediterranei) protein is Halolysin (hly).